Here is a 791-residue protein sequence, read N- to C-terminus: Metabotropic glutamate receptor-like protein D (791 aa).

A signal peptide spans 1–22 (MKINSFLIILILLFISIKNSNG). Residues 23–390 (EPEKKFKLIT…TEVYQSRPIQ (368 aa)) lie on the Extracellular side of the membrane. Asparagine 72, asparagine 168, asparagine 279, asparagine 290, asparagine 306, and asparagine 349 each carry an N-linked (GlcNAc...) asparagine glycan. The chain crosses the membrane as a helical span at residues 391-411 (IAISSISSFFIVTVLVMMGLV). The Cytoplasmic portion of the chain corresponds to 412–424 (VRFRKNPSIRSAS). Residues 425–445 (PIFLNFILFGALIIYVGIIIW) traverse the membrane as a helical segment. Over 446–453 (SSSINSAS) the chain is Extracellular. A helical membrane pass occupies residues 454 to 474 (CNAQFWLVTLGFTTLIGSLVV). At 475 to 495 (KNVRIWLIFDNPELKLVKITN) the chain is on the cytoplasmic side. The chain crosses the membrane as a helical span at residues 496–516 (LQLVPWVGVCLVINIILMSIL). The Extracellular portion of the chain corresponds to 517–550 (TSVGDLREVNAQGIDSLGKYEFMRICKMNSSGAS). An N-linked (GlcNAc...) asparagine glycan is attached at asparagine 545. The chain crosses the membrane as a helical span at residues 551 to 571 (TLYTILAYFAALLLIGVFVSW). Over 572-585 (KIRIVDILEFNESK) the chain is Cytoplasmic. The chain crosses the membrane as a helical span at residues 586-606 (AIANTLYAISFCLFVIVPLMI). At 607–615 (SPQDKQSEK) the chain is on the extracellular side. Residues 616-636 (IILCIAGLFIVTAAVLIIFVP) form a helical membrane-spanning segment. Over 637-791 (KFYRVYIFGS…KNEENNDGDN (155 aa)) the chain is Cytoplasmic. Disordered regions lie at residues 664-715 (TARA…SEPN) and 746-791 (IITE…DGDN). Over residues 674–689 (SSGGGAGSGGATGGSG) the composition is skewed to gly residues. Over residues 749-760 (ENGQDSNNNNNN) the composition is skewed to low complexity. The stretch at 752–781 (QDSNNNNNNEENKDNNIENNKISEEIKENL) forms a coiled coil. Positions 761 to 785 (EENKDNNIENNKISEEIKENLKNEE) are enriched in basic and acidic residues.

This sequence in the N-terminal section; belongs to the BMP lipoprotein family. In the C-terminal section; belongs to the G-protein coupled receptor 3 family. GABA-B receptor subfamily.

It is found in the membrane. The sequence is that of Metabotropic glutamate receptor-like protein D (grlD) from Dictyostelium discoideum (Social amoeba).